The following is a 324-amino-acid chain: tRNA (cytidine(32)/guanosine(34)-2'-O)-methyltransferase (324 aa).

S-adenosyl-L-methionine contacts are provided by glycine 53, tryptophan 55, aspartate 75, aspartate 91, and aspartate 116. Lysine 156 acts as the Proton acceptor in catalysis. Residues 221–240 are required for binding to WDR6; the sequence is DFNQLDGPTRVIVPFVACGD.

This sequence belongs to the class I-like SAM-binding methyltransferase superfamily. RNA methyltransferase RlmE family. TRM7 subfamily. Interacts with WDR6; the interaction is direct, and required for 2'-O-methylation of position 34 in substrate tRNAs.

It is found in the cytoplasm. The protein localises to the nucleus. It catalyses the reaction cytidine(32)/guanosine(34) in tRNA + 2 S-adenosyl-L-methionine = 2'-O-methylcytidine(32)/2'-O-methylguanosine(34) in tRNA + 2 S-adenosyl-L-homocysteine + 2 H(+). Methylates the 2'-O-ribose of nucleotides at positions 32 and 34 of the tRNA anticodon loop of substrate tRNAs. Requisite for faithful cytoplasmic translation. Requires THADA for methylation of the cytidine at position 32 of the anticodon loop of substrate tRNAs. Requires WDR6 for methylation of the nucleotide at position 34 of the anticodon loop of substrate tRNAs. Promotes translation efficiency of the UUU codon. Plays a role in neurogenesis. Required for expression of genes involved in neurogenesis and mitochondrial translation and energy generation. Requisite for RNA-mediated gene silencing. May modify position 32 in tRNA(Arg(ACG)), tRNA(Gln(CUG)), tRNA(Leu(UAA)), tRNA(Leu(UAG)), tRNA(Leu(AAG)), tRNA(Leu(CAG)), tRNA(Phe(GAA)), tRNA(Trp(CCA)) and tRNA(Val(AAC)), and position 34 in tRNA(Phe(GAA)), tRNA(Leu(CAA)), tRNA(Leu(UAA)), tRNA(Sec(UCA)), and tRNA(Trp(CCA)). This chain is tRNA (cytidine(32)/guanosine(34)-2'-O)-methyltransferase, found in Mus musculus (Mouse).